A 264-amino-acid chain; its full sequence is S-adenosylmethionine decarboxylase proenzyme (264 aa).

Residue Ser113 is the Schiff-base intermediate with substrate; via pyruvic acid of the active site. A Pyruvic acid (Ser); by autocatalysis modification is found at Ser113. The active-site Proton acceptor; for processing activity is the His118. Cys141 functions as the Proton donor; for catalytic activity in the catalytic mechanism.

It belongs to the prokaryotic AdoMetDC family. Type 2 subfamily. As to quaternary structure, heterooctamer of four alpha and four beta chains arranged as a tetramer of alpha/beta heterodimers. It depends on pyruvate as a cofactor. Is synthesized initially as an inactive proenzyme. Formation of the active enzyme involves a self-maturation process in which the active site pyruvoyl group is generated from an internal serine residue via an autocatalytic post-translational modification. Two non-identical subunits are generated from the proenzyme in this reaction, and the pyruvate is formed at the N-terminus of the alpha chain, which is derived from the carboxyl end of the proenzyme. The post-translation cleavage follows an unusual pathway, termed non-hydrolytic serinolysis, in which the side chain hydroxyl group of the serine supplies its oxygen atom to form the C-terminus of the beta chain, while the remainder of the serine residue undergoes an oxidative deamination to produce ammonia and the pyruvoyl group blocking the N-terminus of the alpha chain.

The catalysed reaction is S-adenosyl-L-methionine + H(+) = S-adenosyl 3-(methylsulfanyl)propylamine + CO2. It participates in amine and polyamine biosynthesis; S-adenosylmethioninamine biosynthesis; S-adenosylmethioninamine from S-adenosyl-L-methionine: step 1/1. Its function is as follows. Catalyzes the decarboxylation of S-adenosylmethionine to S-adenosylmethioninamine (dcAdoMet), the propylamine donor required for the synthesis of the polyamines spermine and spermidine from the diamine putrescine. This chain is S-adenosylmethionine decarboxylase proenzyme, found in Pseudomonas aeruginosa (strain UCBPP-PA14).